The chain runs to 612 residues: Autophagy-related protein 28 (612 aa).

The interval 44 to 72 (NHMEEQSPKFESSFPRRTSEGPVDDVGKS) is disordered. The stretch at 214-296 (YQAKAQDKQA…QRTLKNECFQ (83 aa)) forms a coiled coil.

It belongs to the ATG28 family. As to quaternary structure, interacts with ATG35.

The protein localises to the cytoplasm. Its subcellular location is the vacuole membrane. The protein resides in the cytoplasmic vesicle membrane. Required for the autophagic degradation of peroxisomes called pexophagy, but not essential for general autophagy. Involved in resistance to elevated pH. This Komagataella phaffii (strain GS115 / ATCC 20864) (Yeast) protein is Autophagy-related protein 28 (ATG28).